The primary structure comprises 452 residues: Probable phosphoglucosamine mutase (452 aa).

The active-site Phosphoserine intermediate is the Ser101. Residues Ser101, Asp242, Asp244, and Asp246 each contribute to the Mg(2+) site. Phosphoserine is present on Ser101.

The protein belongs to the phosphohexose mutase family. It depends on Mg(2+) as a cofactor. In terms of processing, activated by phosphorylation.

The catalysed reaction is alpha-D-glucosamine 1-phosphate = D-glucosamine 6-phosphate. Functionally, catalyzes the conversion of glucosamine-6-phosphate to glucosamine-1-phosphate. This chain is Probable phosphoglucosamine mutase, found in Methanosphaera stadtmanae (strain ATCC 43021 / DSM 3091 / JCM 11832 / MCB-3).